A 105-amino-acid polypeptide reads, in one-letter code: UPF0145 protein AHA_2580 (105 aa).

The protein belongs to the UPF0145 family.

The sequence is that of UPF0145 protein AHA_2580 from Aeromonas hydrophila subsp. hydrophila (strain ATCC 7966 / DSM 30187 / BCRC 13018 / CCUG 14551 / JCM 1027 / KCTC 2358 / NCIMB 9240 / NCTC 8049).